Here is a 385-residue protein sequence, read N- to C-terminus: Probable protein phosphatase 2C 79 (385 aa).

An N-terminal signal peptide occupies residues 1-18; that stretch reads MLSLFFNFLTSCLWPSSS. A PPM-type phosphatase domain is found at 47-356; it reads DFSMAVVQAN…DDITVVVLFL (310 aa). Phosphoserine is present on Ser76. Mn(2+)-binding residues include Asp87, Gly88, Asp288, and Asp347.

This sequence belongs to the PP2C family. Mg(2+) is required as a cofactor. Mn(2+) serves as cofactor.

The catalysed reaction is O-phospho-L-seryl-[protein] + H2O = L-seryl-[protein] + phosphate. It carries out the reaction O-phospho-L-threonyl-[protein] + H2O = L-threonyl-[protein] + phosphate. Its function is as follows. May dephosphorylate and repress plasma membrane H(+)-ATPases (PM H(+)-ATPases, e.g. AHA1 and AHA2), thus influencing negatively plant growth and fitness. This Arabidopsis thaliana (Mouse-ear cress) protein is Probable protein phosphatase 2C 79.